Here is an 873-residue protein sequence, read N- to C-terminus: Zinc fingers and homeoboxes protein 1 (873 aa).

The tract at residues 24-63 (LISDLDEGPPVLTPVENTRAESISSDEEVHESVDSDNQQN) is disordered. The residue at position 36 (threonine 36) is a Phosphothreonine. 3 positions are modified to phosphoserine: serine 45, serine 47, and serine 48. 2 C2H2-type zinc fingers span residues 70–93 (YECKYCTFQTPDLNMFTFHVDSEH) and 102–125 (YVCVECNFLTKRYDALSEHNLKYH). A Glycyl lysine isopeptide (Lys-Gly) (interchain with G-Cter in SUMO2) cross-link involves residue lysine 159. Residues 200–236 (HNSVEDVPEEKENEIKPDREEIVENPSSSASESNTST) are disordered. Position 202 is a phosphoserine (serine 202). Residues 212 to 221 (NEIKPDREEI) show a composition bias toward basic and acidic residues. Residues 223-236 (ENPSSSASESNTST) show a composition bias toward low complexity. The interval 272 to 432 (NSNLIPKVLI…QNNIQKSQVP (161 aa)) is required for dimerization. Residues 272-564 (NSNLIPKVLI…AQPKQSWNPF (293 aa)) are required for interaction with NFYA. The segment at residues 284–346 (NSIPTYNAAL…LKHGVSWTPE (63 aa)) is a DNA-binding region (homeobox 1). Glycyl lysine isopeptide (Lys-Gly) (interchain with G-Cter in SUMO2) cross-links involve residues lysine 441, lysine 454, lysine 485, and lysine 629. DNA-binding regions (homeobox) lie at residues 464-526 (SFGI…KSNQ) and 569-630 (PQKF…EEKM). Disordered regions lie at residues 626–667 (KEEK…ICKK) and 732–769 (SSMNGLSSLRKRGRGRPKGRGRGRPRGRPRGSKRINNW). The residue at position 648 (serine 648) is a Phosphoserine. Positions 660 to 722 (STGKICKKTP…YAWKNGNLKW (63 aa)) form a DNA-binding region, homeobox 4. The required for nuclear localization stretch occupies residues 734 to 768 (MNGLSSLRKRGRGRPKGRGRGRPRGRPRGSKRINN). The segment covering 740–764 (LRKRGRGRPKGRGRGRPRGRPRGSK) has biased composition (basic residues). Phosphoserine is present on serine 774. The segment at residues 777 to 832 (KFKTGTAILKDYYLKHKFLNEQDLDELVNKSHMGYEQVREWFAERQRRSELGIELF) is a DNA-binding region (homeobox 5). The segment at 829–873 (IELFEENEEEDEVIDDQEEDEEETDDSDTWEPPRHVKRKLSKSDD) is disordered. A compositionally biased stretch (acidic residues) spans 831–857 (LFEENEEEDEVIDDQEEDEEETDDSDT). Residues 831–873 (LFEENEEEDEVIDDQEEDEEETDDSDTWEPPRHVKRKLSKSDD) form a required for repressor activity region. Positions 863-873 (HVKRKLSKSDD) are enriched in basic residues.

It belongs to the ZHX family. In terms of assembly, forms homodimers. Heterodimer (via HD1 domain) with ZHX2 (via HD1 domain). Also forms a heterodimer with ZHX3 which is a prerequisite for repressor activity. Interacts with ATF7IP and NFYA. Interacts (via homeobox domains) with DNMT3B (via PWWP domain).

It is found in the nucleus. Its function is as follows. Acts as a transcriptional repressor. Increases DNMT3B-mediated repressive transcriptional activity when DNMT3B is tethered to DNA. May link molecule between DNMT3B and other co-repressor proteins. The protein is Zinc fingers and homeoboxes protein 1 (ZHX1) of Pan troglodytes (Chimpanzee).